A 630-amino-acid polypeptide reads, in one-letter code: Adagio-like protein 3 (630 aa).

Residues Glu-54–Glu-126 enclose the PAS domain. S-4a-FMN cysteine is present on Cys-102. The region spanning Tyr-220 to Cys-268 is the F-box domain. 5 Kelch repeats span residues Ser-380–Asp-430, Ser-432–Gly-483, Thr-485–His-537, Gly-545–Gly-597, and Thr-599–Asp-629.

Belongs to the ADAGIO family. FMN binds covalently to cysteine after exposure to blue light and is reversed in the dark.

Its subcellular location is the nucleus. It functions in the pathway protein modification; protein ubiquitination. Functionally, component of an E3 ubiquitin ligase complex that plays a central role in blue light-dependent circadian cycles. Acts as a blue light photoreceptor, due to the presence of FMN, that mediates light-regulated protein degradation of critical clock components by targeting them to the proteasome complex. The SCF(ADO3) E3 ubiquitin ligase complex is involved in the regulation of circadian clock-dependent processes including transition to flowering time, hypocotyl elongation, cotyledons and leaf movement rhythms. This Oryza sativa subsp. japonica (Rice) protein is Adagio-like protein 3.